The sequence spans 336 residues: Ketol-acid reductoisomerase (NADP(+)) (336 aa).

Residues 1-182 (MAVIYYDKDA…GVTRAGVIET (182 aa)) form the KARI N-terminal Rossmann domain. Residues 25-28 (YGSQ), R48, S51, S53, and 83-86 (DENQ) contribute to the NADP(+) site. Residue H108 is part of the active site. NADP(+) is bound at residue G134. One can recognise a KARI C-terminal knotted domain in the interval 183-328 (TFKEETETDL…KELRKMMPWL (146 aa)). Mg(2+) contacts are provided by D191, E195, E227, and E231. S252 lines the substrate pocket.

The protein belongs to the ketol-acid reductoisomerase family. Mg(2+) is required as a cofactor.

It carries out the reaction (2R)-2,3-dihydroxy-3-methylbutanoate + NADP(+) = (2S)-2-acetolactate + NADPH + H(+). The enzyme catalyses (2R,3R)-2,3-dihydroxy-3-methylpentanoate + NADP(+) = (S)-2-ethyl-2-hydroxy-3-oxobutanoate + NADPH + H(+). Its pathway is amino-acid biosynthesis; L-isoleucine biosynthesis; L-isoleucine from 2-oxobutanoate: step 2/4. It functions in the pathway amino-acid biosynthesis; L-valine biosynthesis; L-valine from pyruvate: step 2/4. In terms of biological role, involved in the biosynthesis of branched-chain amino acids (BCAA). Catalyzes an alkyl-migration followed by a ketol-acid reduction of (S)-2-acetolactate (S2AL) to yield (R)-2,3-dihydroxy-isovalerate. In the isomerase reaction, S2AL is rearranged via a Mg-dependent methyl migration to produce 3-hydroxy-3-methyl-2-ketobutyrate (HMKB). In the reductase reaction, this 2-ketoacid undergoes a metal-dependent reduction by NADPH to yield (R)-2,3-dihydroxy-isovalerate. The polypeptide is Ketol-acid reductoisomerase (NADP(+)) (Thermotoga petrophila (strain ATCC BAA-488 / DSM 13995 / JCM 10881 / RKU-1)).